A 470-amino-acid polypeptide reads, in one-letter code: MDVLCEENTSLSSPTNSFMQLNDDTRLYHNDFNSGEANTSDAFNWTVDSENRTNLSCEGCLSPPCFSLLHLQEKNWSALLTAVVIILTIAGNILVIMAVSLEKKLQNATNYFLMSLAIADMLLGFLVMPVSMLTILYGYRWPLPSKLCAVWIYLDVLFSTASIMHLCAISLDRYVAIQNPIHHRRFNSRTKAFLKIIAVWTISVGISMPIPVFGLQDDSKVFKEGSCLLADDNFVLIGSFVSFFIPLTIMVITYFLTIKSLQKEATLCVSDLGTRAKLASFSFLPQSSLSSEKLFQRSIHREPGSYGRRTMQSISNEQKACKVLGIVFFLFVVMWCPFFITNIMAVICKESCNEDVIGALLNVFVWIGYLSSAVNPLVYTLFNKTYRSAFSRYIQCQYKENKKPLQLILVNTIPALAYKSSQLQTGQKENSKQDDKATENDCTMVALGKQHSEDAPADNSNTVNEKVSCV.

Residues 1–80 (MDVLCEENTS…LQEKNWSALL (80 aa)) are Extracellular-facing. N-linked (GlcNAc...) asparagine glycosylation is found at Asn8, Asn38, Asn44, Asn51, Asn54, and Asn75. A helical transmembrane segment spans residues 81-97 (TAVVIILTIAGNILVIM). Over 98-111 (AVSLEKKLQNATNY) the chain is Cytoplasmic. The helical transmembrane segment at 112–137 (FLMSLAIADMLLGFLVMPVSMLTILY) threads the bilayer. Residues 138-146 (GYRWPLPSK) lie on the Extracellular side of the membrane. The chain crosses the membrane as a helical span at residues 147 to 171 (LCAVWIYLDVLFSTASIMHLCAISL). Cys148 and Cys227 are joined by a disulfide. Asp155 serves as a coordination point for serotonin. The short motif at 172–174 (DRY) is the DRY motif; important for ligand-induced conformation changes element. The Cytoplasmic portion of the chain corresponds to 172–191 (DRYVAIQNPIHHRRFNSRTK). A helical membrane pass occupies residues 192–215 (AFLKIIAVWTISVGISMPIPVFGL). Over 216–232 (QDDSKVFKEGSCLLADD) the chain is Extracellular. Residues 233–258 (NFVLIGSFVSFFIPLTIMVITYFLTI) form a helical membrane-spanning segment. Over 259–321 (KSLQKEATLC…QSISNEQKAC (63 aa)) the chain is Cytoplasmic. At Ser280 the chain carries Phosphoserine. The chain crosses the membrane as a helical span at residues 322–347 (KVLGIVFFLFVVMWCPFFITNIMAVI). Asn342 lines the serotonin pocket. Cys348 and Cys352 are joined by a disulfide. The Extracellular portion of the chain corresponds to 348-355 (CKESCNED). A helical transmembrane segment spans residues 356–381 (VIGALLNVFVWIGYLSSAVNPLVYTL). The short motif at 375-379 (NPLVY) is the NPxxY motif; important for ligand-induced conformation changes and signaling element. The Cytoplasmic segment spans residues 382 to 470 (FNKTYRSAFS…NTVNEKVSCV (89 aa)). The disordered stretch occupies residues 448 to 470 (GKQHSEDAPADNSNTVNEKVSCV). The span at 458–470 (DNSNTVNEKVSCV) shows a compositional bias: polar residues. Residues 468–470 (SCV) carry the PDZ-binding motif.

The protein belongs to the G-protein coupled receptor 1 family. Interacts (via C-terminus) with MPDZ and PATJ. May interact (via C-terminus) with MPP3, PRDX6, DLG4, DLG1, CASK, APBA1 and MAGI2. Interacts with GRM2 and DRD2; this may affect signaling.

The protein localises to the cell membrane. The protein resides in the cell projection. Its subcellular location is the dendrite. It localises to the axon. It is found in the cytoplasmic vesicle. The protein localises to the membrane. The protein resides in the caveola. Its subcellular location is the presynapse. With respect to regulation, G-protein coupled receptor activity is regulated by lipids: oleamide increases HTR2A-mediated activity. Its function is as follows. G-protein coupled receptor for 5-hydroxytryptamine (serotonin). Also functions as a receptor for various drugs and psychoactive substances, including mescaline, psilocybin, 1-(2,5-dimethoxy-4-iodophenyl)-2-aminopropane (DOI) and lysergic acid diethylamide (LSD). Ligand binding causes a conformation change that triggers signaling via guanine nucleotide-binding proteins (G proteins) and modulates the activity of downstream effectors. HTR2A is coupled to G(q)/G(11) G alpha proteins and activates phospholipase C-beta, releasing diacylglycerol (DAG) and inositol 1,4,5-trisphosphate (IP3) second messengers that modulate the activity of phosphatidylinositol 3-kinase and promote the release of Ca(2+) ions from intracellular stores, respectively. Beta-arrestin family members inhibit signaling via G proteins and mediate activation of alternative signaling pathways. Affects neural activity, perception, cognition and mood. Plays a role in the regulation of behavior, including responses to anxiogenic situations and psychoactive substances. Plays a role in intestinal smooth muscle contraction, and may play a role in arterial vasoconstriction. This Sus scrofa (Pig) protein is 5-hydroxytryptamine receptor 2A (HTR2A).